The chain runs to 291 residues: N-acetylmannosamine kinase (291 aa).

Residues 5-12 (AIDIGGTK) and 132-139 (GVGGGVVS) each bind ATP. Positions 156, 166, 168, and 173 each coordinate Zn(2+).

Belongs to the ROK (NagC/XylR) family. NanK subfamily. As to quaternary structure, homodimer.

It catalyses the reaction an N-acyl-D-mannosamine + ATP = an N-acyl-D-mannosamine 6-phosphate + ADP + H(+). The protein operates within amino-sugar metabolism; N-acetylneuraminate degradation; D-fructose 6-phosphate from N-acetylneuraminate: step 2/5. Functionally, catalyzes the phosphorylation of N-acetylmannosamine (ManNAc) to ManNAc-6-P. The polypeptide is N-acetylmannosamine kinase (Shigella flexneri serotype 5b (strain 8401)).